The chain runs to 229 residues: PKHD-type hydroxylase BRADO6316 (229 aa).

The region spanning 78 to 180 (QIFPPLFNRY…RVASFFWLQS (103 aa)) is the Fe2OG dioxygenase domain. Histidine 98, aspartate 100, and histidine 161 together coordinate Fe cation. 2-oxoglutarate is bound at residue arginine 171.

It depends on Fe(2+) as a cofactor. L-ascorbate is required as a cofactor.

This is PKHD-type hydroxylase BRADO6316 from Bradyrhizobium sp. (strain ORS 278).